Reading from the N-terminus, the 260-residue chain is Proteasome subunit alpha (260 aa).

The protein belongs to the peptidase T1A family. As to quaternary structure, the 20S proteasome core is composed of 14 alpha and 14 beta subunits that assemble into four stacked heptameric rings, resulting in a barrel-shaped structure. The two inner rings, each composed of seven catalytic beta subunits, are sandwiched by two outer rings, each composed of seven alpha subunits. The catalytic chamber with the active sites is on the inside of the barrel. Has a gated structure, the ends of the cylinder being occluded by the N-termini of the alpha-subunits. Is capped at one or both ends by the proteasome regulatory ATPase, PAN.

The protein localises to the cytoplasm. Its activity is regulated as follows. The formation of the proteasomal ATPase PAN-20S proteasome complex, via the docking of the C-termini of PAN into the intersubunit pockets in the alpha-rings, triggers opening of the gate for substrate entry. Interconversion between the open-gate and close-gate conformations leads to a dynamic regulation of the 20S proteasome proteolysis activity. Functionally, component of the proteasome core, a large protease complex with broad specificity involved in protein degradation. The sequence is that of Proteasome subunit alpha from Thermococcus onnurineus (strain NA1).